Consider the following 104-residue polypeptide: NADH-quinone oxidoreductase subunit K (104 aa).

3 consecutive transmembrane segments (helical) span residues Val-4–Ala-24, Val-31–Phe-51, and Leu-67–Leu-87.

Belongs to the complex I subunit 4L family. NDH-1 is composed of 14 different subunits. Subunits NuoA, H, J, K, L, M, N constitute the membrane sector of the complex.

The protein resides in the cell membrane. It carries out the reaction a quinone + NADH + 5 H(+)(in) = a quinol + NAD(+) + 4 H(+)(out). NDH-1 shuttles electrons from NADH, via FMN and iron-sulfur (Fe-S) centers, to quinones in the respiratory chain. The immediate electron acceptor for the enzyme in this species is believed to be a menaquinone. Couples the redox reaction to proton translocation (for every two electrons transferred, four hydrogen ions are translocated across the cytoplasmic membrane), and thus conserves the redox energy in a proton gradient. This is NADH-quinone oxidoreductase subunit K from Bacillus cereus (strain AH187).